Reading from the N-terminus, the 221-residue chain is Imidazoleglycerol-phosphate dehydratase (221 aa).

This sequence belongs to the imidazoleglycerol-phosphate dehydratase family.

The catalysed reaction is D-erythro-1-(imidazol-4-yl)glycerol 3-phosphate = 3-(imidazol-4-yl)-2-oxopropyl phosphate + H2O. It participates in amino-acid biosynthesis; L-histidine biosynthesis; L-histidine from 5-phospho-alpha-D-ribose 1-diphosphate: step 6/9. This Kluyveromyces lactis (strain ATCC 8585 / CBS 2359 / DSM 70799 / NBRC 1267 / NRRL Y-1140 / WM37) (Yeast) protein is Imidazoleglycerol-phosphate dehydratase (HIS3).